A 179-amino-acid polypeptide reads, in one-letter code: Bifunctional protein PyrR (179 aa).

The short motif at 100–112 is the PRPP-binding element; that stretch reads VILVDDVLFTGRT.

Belongs to the purine/pyrimidine phosphoribosyltransferase family. PyrR subfamily.

It catalyses the reaction UMP + diphosphate = 5-phospho-alpha-D-ribose 1-diphosphate + uracil. In terms of biological role, regulates the transcription of the pyrimidine nucleotide (pyr) operon in response to exogenous pyrimidines. Functionally, also displays a weak uracil phosphoribosyltransferase activity which is not physiologically significant. In Actinobacillus succinogenes (strain ATCC 55618 / DSM 22257 / CCUG 43843 / 130Z), this protein is Bifunctional protein PyrR.